Here is a 166-residue protein sequence, read N- to C-terminus: Endoribonuclease YbeY (166 aa).

Zn(2+) is bound by residues His-129, His-133, and His-139.

Belongs to the endoribonuclease YbeY family. Requires Zn(2+) as cofactor.

The protein resides in the cytoplasm. In terms of biological role, single strand-specific metallo-endoribonuclease involved in late-stage 70S ribosome quality control and in maturation of the 3' terminus of the 16S rRNA. This Heliobacterium modesticaldum (strain ATCC 51547 / Ice1) protein is Endoribonuclease YbeY.